The primary structure comprises 258 residues: MTQHSRDTPQFYLTAPSPCPYLPGRHERKVFTHLVGNKAGELNDLLTHGGFRRSQSIAYRPACDQCRACVSVRVIANEFKPSRNQRKLLARNADIVGEQRNPVPTSEQYSVFRAYLDQRHRYGGMADMTVLDYAMMVEDSHVQTRMIEYRKRTPDTGITGRGGELIAAALTDVLGDGLSMVYSFYEPNEQHRSLGTFMILDHIARARRLGLPYVYLGYWIEGSKKMDYKGRYLPQQRLAPSGWLRIDASGEMQPEPQD.

It belongs to the R-transferase family. Bpt subfamily.

Its subcellular location is the cytoplasm. It carries out the reaction N-terminal L-glutamyl-[protein] + L-leucyl-tRNA(Leu) = N-terminal L-leucyl-L-glutamyl-[protein] + tRNA(Leu) + H(+). The enzyme catalyses N-terminal L-aspartyl-[protein] + L-leucyl-tRNA(Leu) = N-terminal L-leucyl-L-aspartyl-[protein] + tRNA(Leu) + H(+). Its function is as follows. Functions in the N-end rule pathway of protein degradation where it conjugates Leu from its aminoacyl-tRNA to the N-termini of proteins containing an N-terminal aspartate or glutamate. In Rhodopseudomonas palustris (strain ATCC BAA-98 / CGA009), this protein is Aspartate/glutamate leucyltransferase.